A 254-amino-acid chain; its full sequence is uncharacterized protein (254 aa).

One can recognise an S4 RNA-binding domain in the interval 14-81 (IRLQKVLSQA…DSLVYLALNK (68 aa)). The Nucleophile role is filled by aspartate 119.

Belongs to the pseudouridine synthase RsuA family.

The catalysed reaction is a uridine in RNA = a pseudouridine in RNA. This is an uncharacterized protein from Mycobacterium bovis (strain ATCC BAA-935 / AF2122/97).